The primary structure comprises 43 residues: Potassium channel toxin gamma-KTx 4.4 (43 aa).

Disulfide bonds link C5–C23, C11–C34, C20–C39, and C24–C41.

It belongs to the ergtoxin family. Gamma-KTx 4 subfamily. In terms of tissue distribution, expressed by the venom gland.

Its subcellular location is the secreted. Reversibly blocks Kv11/ERG potassium channels. The polypeptide is Potassium channel toxin gamma-KTx 4.4 (Centruroides exilicauda (Bark scorpion)).